We begin with the raw amino-acid sequence, 313 residues long: MGCRCCKMIQSYLFDPVQVPSPGFVNEVNNCKLEEDDTVRLKGTQNSEVEVPGSTLHSGSLSKPDSSGSTTGLPCQGSLTQEDSEERPCVEKHGIVNGIRPTATLQSVRSPRPQQVDSVSWASSPWVATIDSAHPAQPFLEGEDYRKQSCMLPTLEGTQMVGHGDSRAPAEALAVADHIPYIPAPDYPQVWSPEVDNVNPEEKDCLFENHSEVEPLPGIHPRVSQQGLSMPFSLKRSWDSLNEAGTTEVLSVYFKEEDPTQPTPVADPGNEREDPHTYNGNKEGAVVDEDAEVAEALAALEAATAGEDADDAD.

A disordered region spans residues 42–95 (KGTQNSEVEVPGSTLHSGSLSKPDSSGSTTGLPCQGSLTQEDSEERPCVEKHGI). The segment covering 58–69 (SGSLSKPDSSGS) has biased composition (low complexity). Serine 60 is subject to Phosphoserine. Residues 70-81 (TTGLPCQGSLTQ) show a composition bias toward polar residues. The residue at position 104 (threonine 104) is a Phosphothreonine. Phosphoserine occurs at positions 107, 237, and 240. Residues 253 to 288 (YFKEEDPTQPTPVADPGNEREDPHTYNGNKEGAVVD) form a disordered region.

In terms of assembly, interacts with KEAP1; this interaction prevents the ubiquitination of KEAP1 by TRIM25, thus protecting KEAP1 from degradation. Found in association with PDCD10 and members of the STE20 kinases, such as STK24, STK25, and STK26.

It is found in the cell membrane. Its function is as follows. Acts as a tumor suppressor. Acts as a tumor suppressor for colorectal cancer cell proliferation by targeting KEAP1/USP17/ELK1/CDK6 axis. The protein is PDCD10 and GCKIII kinases-associated protein 1 of Rattus norvegicus (Rat).